A 257-amino-acid polypeptide reads, in one-letter code: MPYLYRVAYDGALFHGFTGHSNSVEAALRRVFGHLLGRGSRTDPGVSAVGNAVLAPSRLPLGYINSRLPRGVWTWAVAEVGEGFNPRRARRRRYLYVAPHWGEDVEAMREVAELFKGTHDFSSFIQFRGERGTPPVTTVDEVGVEVAGRLVYLYFVGKGFRNKQIRKMAWAILAAGRGVVSRRYVEELLERPRPGAVPSAPAEGLILLDIEYDVKFDVDRGELRKAYVYFLEKYRRLEALAAAYRAAGERLLFYDDL.

Asp-43 serves as the catalytic Nucleophile. Tyr-94 contributes to the substrate binding site.

Belongs to the tRNA pseudouridine synthase TruA family.

It catalyses the reaction uridine(38/39/40) in tRNA = pseudouridine(38/39/40) in tRNA. Formation of pseudouridine at positions 38, 39 and 40 in the anticodon stem and loop of transfer RNAs. The chain is tRNA pseudouridine synthase A from Pyrobaculum calidifontis (strain DSM 21063 / JCM 11548 / VA1).